The chain runs to 264 residues: Cell division protein FtsQ (264 aa).

The segment at 1–24 (MAGPTTAERGDRQQESSGPPPARW) is disordered. Topologically, residues 1–31 (MAGPTTAERGDRQQESSGPPPARWSGTRRLR) are cytoplasmic. Residues 32-52 (ALVVLAALLVLLAGGCAWLLY) traverse the membrane as a helical segment. At 53–264 (GSSWLRLERV…VPTAPASSGS (212 aa)) the chain is on the extracellular side. Positions 57 to 126 (LRLERVSVSG…HGIGLKVTER (70 aa)) constitute a POTRA domain.

It belongs to the FtsQ/DivIB family. FtsQ subfamily.

It is found in the cell membrane. In terms of biological role, essential cell division protein. The polypeptide is Cell division protein FtsQ (Streptomyces collinus).